Here is a 1468-residue protein sequence, read N- to C-terminus: ABC transporter G family member 34 (1468 aa).

Residues 33-53 (NGAFSRSSSSSSRRMRGEEDD) form a disordered region. Residues 178–450 (ANALGILPTR…FELMGFKCPE (273 aa)) enclose the ABC transporter 1 domain. 211–218 (GPPGSGKT) serves as a coordination point for ATP. Residues 528–741 (ELLKANIDRE…AQNAVSVNEF (214 aa)) form the ABC transmembrane type-2 1 domain. 6 consecutive transmembrane segments (helical) span residues 546–566 (FVYI…MTVF), 575–595 (SVAD…MIML), 634–654 (SPMS…VIGF), 666–686 (LLML…GGAA), 690–710 (IVAN…GGFI), and 778–798 (IGFG…TLAL). Positions 871–1123 (LTFEDIKYSV…ELIKYFEGIQ (253 aa)) constitute an ABC transporter 2 domain. An ATP-binding site is contributed by 916-923 (GVSGAGKT). The region spanning 1196-1410 (IQCLACLWKQ…TLYGLIVSQY (215 aa)) is the ABC transmembrane type-2 2 domain. Transmembrane regions (helical) follow at residues 1217-1237 (AIRL…FWDL), 1247-1267 (LFNA…LNGQ), 1303-1323 (FPYT…MIGF), 1330-1350 (FFWY…YGMM), 1360-1380 (VASI…GFVI), 1387-1407 (VWWR…GLIV), and 1440-1460 (FVAV…GFAI).

Belongs to the ABC transporter superfamily. ABCG family. PDR (TC 3.A.1.205) subfamily.

It is found in the membrane. In terms of biological role, may be a general defense protein. This is ABC transporter G family member 34 from Oryza sativa subsp. japonica (Rice).